We begin with the raw amino-acid sequence, 175 residues long: Riboflavin kinase (175 aa).

54 to 59 (GLGEGK) provides a ligand contact to CDP. Mg(2+)-binding residues include T83 and N85. FMN is bound by residues T142 and E150. A CDP-binding site is contributed by 155-158 (FHLR).

The protein belongs to the archaeal riboflavin kinase family. The cofactor is Mg(2+).

It carries out the reaction riboflavin + CTP = CDP + FMN + H(+). The protein operates within cofactor biosynthesis; FMN biosynthesis; FMN from riboflavin (CTP route): step 1/1. Catalyzes the CTP-dependent phosphorylation of riboflavin (vitamin B2) to form flavin mononucleotide (FMN). The sequence is that of Riboflavin kinase from Saccharolobus solfataricus (strain ATCC 35092 / DSM 1617 / JCM 11322 / P2) (Sulfolobus solfataricus).